Here is a 345-residue protein sequence, read N- to C-terminus: Anthranilate phosphoribosyltransferase (345 aa).

5-phospho-alpha-D-ribose 1-diphosphate is bound by residues G87, 90 to 91 (GD), T95, 97 to 100 (NAST), 115 to 123 (KHGNRSFSS), and S127. G87 is an anthranilate binding site. Residue S99 coordinates Mg(2+). N118 lines the anthranilate pocket. R173 serves as a coordination point for anthranilate. Residues D232 and E233 each contribute to the Mg(2+) site.

This sequence belongs to the anthranilate phosphoribosyltransferase family. As to quaternary structure, homodimer. Mg(2+) is required as a cofactor.

The enzyme catalyses N-(5-phospho-beta-D-ribosyl)anthranilate + diphosphate = 5-phospho-alpha-D-ribose 1-diphosphate + anthranilate. It functions in the pathway amino-acid biosynthesis; L-tryptophan biosynthesis; L-tryptophan from chorismate: step 2/5. In terms of biological role, catalyzes the transfer of the phosphoribosyl group of 5-phosphorylribose-1-pyrophosphate (PRPP) to anthranilate to yield N-(5'-phosphoribosyl)-anthranilate (PRA). In Aeropyrum pernix (strain ATCC 700893 / DSM 11879 / JCM 9820 / NBRC 100138 / K1), this protein is Anthranilate phosphoribosyltransferase.